A 1162-amino-acid polypeptide reads, in one-letter code: Cartilage intermediate layer protein 2 (1162 aa).

The signal sequence occupies residues 1 to 20; sequence MASPLPLLYLCLAALHLAGA. The segment at 23 to 51 is disordered; sequence ATPTEEHTSTARGLQGRPPDTGQPSPALE. A TSP type-1 domain is found at 146 to 197; the sequence is EAAWGAWGAWGLCSKSCGLGRRLRRRSCQSSSGDTCPGSPQEAQKCVRSRCP. Intrachain disulfides connect C158-C191, C162-C196, C173-C181, and C314-C360. Residues 293 to 377 enclose the Ig-like C2-type domain; it reads PYLVKHPESR…TVRSRAALLT (85 aa). An N-linked (GlcNAc...) asparagine glycan is attached at N330.

May be cleaved into 2 chains possibly by a furin-like protease upon or preceding secretion. Post-translationally, N-glycosylated. Expressed in articulated and meniscal cartilage (at protein level). Also detected in heart, skeletal muscle and brain. Not detected in growth plate cartilage.

The protein localises to the secreted. Its subcellular location is the extracellular space. The protein resides in the extracellular matrix. May play a role in cartilage scaffolding. The chain is Cartilage intermediate layer protein 2 from Mus musculus (Mouse).